A 375-amino-acid chain; its full sequence is Actin-binding Rho-activating protein (375 aa).

Composition is skewed to basic and acidic residues over residues methionine 1–glycine 11 and lysine 79–lysine 99. 2 disordered regions span residues methionine 1–valine 20 and asparagine 38–lysine 99. Residues serine 150 and serine 182 each carry the phosphoserine modification. A compositionally biased stretch (basic and acidic residues) spans glutamine 173 to serine 182. Residues glutamine 173 to proline 204 form a disordered region. Actin-binding stretches follow at residues aspartate 193–alanine 293 and lysine 294–glutamate 375. Interaction with actin regions lie at residues serine 234 to glycine 279 and methionine 346 to glutamate 375.

In terms of assembly, binds F-actin and ABLIM1, ABLIM2 and ABLIM3. Interaction with ABLIM2 and ABLIM3 enhances activity. In terms of tissue distribution, expressed specifically in heart and skeletal muscle.

The protein resides in the cytoplasm. It localises to the myofibril. Its subcellular location is the sarcomere. It is found in the cytoskeleton. In terms of biological role, acts as an activator of serum response factor (SRF)-dependent transcription possibly by inducing nuclear translocation of MKL1 or MKL2 and through a mechanism requiring Rho-actin signaling. This chain is Actin-binding Rho-activating protein, found in Mus musculus (Mouse).